The primary structure comprises 98 residues: MPRSLKKGPYIDIKLERRVLDMNSRGEKKVLKTWCRSSMISPDFVGHTIAVHNGKTHVPVYVSDNMVGHKLGEFAPTRTYRGHAGGKAEKGGAAPKRK.

Residues 77–98 (TRTYRGHAGGKAEKGGAAPKRK) are disordered.

The protein belongs to the universal ribosomal protein uS19 family.

Its function is as follows. Protein S19 forms a complex with S13 that binds strongly to the 16S ribosomal RNA. The protein is Small ribosomal subunit protein uS19 of Chlorobium phaeovibrioides (strain DSM 265 / 1930) (Prosthecochloris vibrioformis (strain DSM 265)).